The chain runs to 391 residues: DNA repair protein NreB (391 aa).

Residues 3–17 (CIECRGRMLCSRKVC) form a C4-type zinc finger. A PIP motif motif is present at residues 384 to 391 (QRTLWEFM).

Belongs to the Nre family. Interacts with the DNA polymerase sliding clamp (PCNA) via the PIP (PCNA-interacting peptide) motif.

In terms of biological role, involved in DNA damage repair. This is DNA repair protein NreB from Archaeoglobus fulgidus (strain ATCC 49558 / DSM 4304 / JCM 9628 / NBRC 100126 / VC-16).